The primary structure comprises 438 residues: Porin AaxA (438 aa).

The signal sequence occupies residues 1–21 (MISFRFLLLSGLCALGISSYA).

Belongs to the OprB family.

It is found in the cell outer membrane. Functionally, facilitates L-arginine uptake, as part of the AaxABC system. The arginine uptake by the bacterium in the macrophage may be a virulence factor against the host innate immune response. The protein is Porin AaxA (aaxA) of Chlamydia pneumoniae (Chlamydophila pneumoniae).